The sequence spans 302 residues: MSPAAELSPTPFGRLLTAMVTPFDAEGAVDLALAGRLARHLVDEGSDGLVVCGTTGESPTLSWDEQSQLLEAVRQAVGPGVPVLAGTGSNCTQEAVKATREAAAAGADGALVVTPYYNKPPQEGLEAHFRAIAEAAPELPLMLYNIPGRTGCSMEPATVARLMDCSNIVSFKAASGTTEEVTALRLACGAKLAIYSGDDGLVLPMLSVGAVGVVSVASHLVGRRMRAMVEAYLSGQPAVALGHHEQLIPLFKALFATTNPIPVKAALELSGWPVGSPRSPLLPLDPAMRAALSDTLAALRPT.

Pyruvate is bound at residue T55. Residue Y144 is the Proton donor/acceptor of the active site. The Schiff-base intermediate with substrate role is filled by K172. Position 214 (V214) interacts with pyruvate.

It belongs to the DapA family. Homotetramer; dimer of dimers.

The protein resides in the cytoplasm. The enzyme catalyses L-aspartate 4-semialdehyde + pyruvate = (2S,4S)-4-hydroxy-2,3,4,5-tetrahydrodipicolinate + H2O + H(+). It participates in amino-acid biosynthesis; L-lysine biosynthesis via DAP pathway; (S)-tetrahydrodipicolinate from L-aspartate: step 3/4. Functionally, catalyzes the condensation of (S)-aspartate-beta-semialdehyde [(S)-ASA] and pyruvate to 4-hydroxy-tetrahydrodipicolinate (HTPA). The protein is 4-hydroxy-tetrahydrodipicolinate synthase of Synechococcus sp. (strain WH7803).